A 319-amino-acid chain; its full sequence is MTETFQHYTVMLKETVDGLNIKPDGIYVDCTLGGAGHSEYLLSQLNTNGHLYAFDQDQKAIDHAKVRLAPYIEKGMVTFIKANFRELEAKIKEHVPQVDGILYDLGVSSPQLDEAERGFSYHQDAPLDMRMDQSAPLSAYDVVNEYSYNELVKIFFRYGEEKFSKQIAREIERVRKIHPIQTTGELVEIIKDVIPAPARRKGGHPAKRIFQAIRIAVNDELGAEEASLEQAIRLLKINGRISVITFHSLEDRIVKSMFKEYSTVQDLPPGLPVVPEEFQPELKLINRKPILPSEEELSENNRSRSAKLRIAEKIRVKEE.

Residues 35–37 (AGH), Asp-55, Phe-84, Asp-104, and Gln-111 contribute to the S-adenosyl-L-methionine site.

The protein belongs to the methyltransferase superfamily. RsmH family.

Its subcellular location is the cytoplasm. The enzyme catalyses cytidine(1402) in 16S rRNA + S-adenosyl-L-methionine = N(4)-methylcytidine(1402) in 16S rRNA + S-adenosyl-L-homocysteine + H(+). Specifically methylates the N4 position of cytidine in position 1402 (C1402) of 16S rRNA. This is Ribosomal RNA small subunit methyltransferase H from Enterococcus hirae.